A 296-amino-acid chain; its full sequence is L-ornithine N(alpha)-acyltransferase (296 aa).

Belongs to the acetyltransferase family. OlsB subfamily.

It carries out the reaction a (3R)-hydroxyacyl-[ACP] + L-ornithine = a lyso-ornithine lipid + holo-[ACP] + H(+). Its pathway is lipid metabolism. In terms of biological role, catalyzes the first step in the biosynthesis of ornithine lipids, which are phosphorus-free membrane lipids. Catalyzes the 3-hydroxyacyl-acyl carrier protein-dependent acylation of ornithine to form lyso-ornithine lipid (LOL). This is L-ornithine N(alpha)-acyltransferase from Rhizobium meliloti (strain 1021) (Ensifer meliloti).